The following is a 334-amino-acid chain: Heat-inducible transcription repressor HrcA (334 aa).

Belongs to the HrcA family.

Negative regulator of class I heat shock genes (grpE-dnaK-dnaJ and groELS operons). Prevents heat-shock induction of these operons. The chain is Heat-inducible transcription repressor HrcA from Paracidovorax citrulli (strain AAC00-1) (Acidovorax citrulli).